The primary structure comprises 102 residues: Large ribosomal subunit protein bL21 (102 aa).

Belongs to the bacterial ribosomal protein bL21 family. In terms of assembly, part of the 50S ribosomal subunit. Contacts protein L20.

Its function is as follows. This protein binds to 23S rRNA in the presence of protein L20. The polypeptide is Large ribosomal subunit protein bL21 (Nocardioides sp. (strain ATCC BAA-499 / JS614)).